A 708-amino-acid polypeptide reads, in one-letter code: ATP-dependent DNA helicase Hel308 (708 aa).

A Q motif motif is present at residues 1-29; sequence MSIDDLKLPSNVIDIIKNRGIKKLNPPQT. Residues Q28 and 46–53 each bind ATP; that span reads SPTGSGKT. One can recognise a Helicase ATP-binding domain in the interval 33-196; the sequence is KKGLLDGNRL…WLGAEPVATN (164 aa). The DEAH box signature appears at 145–148; the sequence is DELH. The Helicase C-terminal domain occupies 229 to 435; it reads HGDDAIIAYT…ERAFYTFLLG (207 aa).

This sequence belongs to the helicase family. Hel308 subfamily. As to quaternary structure, monomer.

It carries out the reaction Couples ATP hydrolysis with the unwinding of duplex DNA by translocating in the 3'-5' direction.. The enzyme catalyses ATP + H2O = ADP + phosphate + H(+). DNA-dependent ATPase and 3'-5' DNA helicase that may be involved in repair of stalled replication forks. In Saccharolobus solfataricus (strain ATCC 35092 / DSM 1617 / JCM 11322 / P2) (Sulfolobus solfataricus), this protein is ATP-dependent DNA helicase Hel308.